Reading from the N-terminus, the 238-residue chain is MRPSKRAADEMRTISFERGVSKHAEGSCLVKFGDTHVLCTASLEEKVPGWMRNTGKGWVTAEYGMLPRSTGERMRREAAAGKQGGRTQEIQRLIGRSLRAVVDMQALGEMQITVDCDVIQADGGTRTAAITGGWVALHECLRWMEARQMVRVEKVLKDHVAAISCGIYEGVPVLDLDYAEDSVAETDSNFVMTGKGGIVEIQGTAEGVPFSEEEFGALMKLARSGIDRLVSLQKMAVA.

Residues Arg86 and 124-126 (GTR) each bind phosphate.

Belongs to the RNase PH family. In terms of assembly, homohexameric ring arranged as a trimer of dimers.

It catalyses the reaction tRNA(n+1) + phosphate = tRNA(n) + a ribonucleoside 5'-diphosphate. Functionally, phosphorolytic 3'-5' exoribonuclease that plays an important role in tRNA 3'-end maturation. Removes nucleotide residues following the 3'-CCA terminus of tRNAs; can also add nucleotides to the ends of RNA molecules by using nucleoside diphosphates as substrates, but this may not be physiologically important. Probably plays a role in initiation of 16S rRNA degradation (leading to ribosome degradation) during starvation. This Brucella melitensis biotype 2 (strain ATCC 23457) protein is Ribonuclease PH.